The following is a 76-amino-acid chain: Conotoxin VnMSGL-0112 (76 aa).

Positions 1 to 20 (MSGLGIMVLTLLLLVSMATS) are cleaved as a signal peptide. The propeptide occupies 21-45 (HQDGRGKQATQRDAINVRRRRSITR). 3 disulfides stabilise this stretch: C49-C61, C53-C70, and C60-C74.

It belongs to the conotoxin O3 superfamily. Expressed by the venom duct.

The protein localises to the secreted. In Conus ventricosus (Mediterranean cone), this protein is Conotoxin VnMSGL-0112.